Consider the following 435-residue polypeptide: Islet cell autoantigen 1-like protein (435 aa).

Positions 44 to 247 (ASDAELDAKL…TAQMMSQIQE (204 aa)) constitute an AH domain. Positions 391-435 (WASQEGSEHSDTLPVPSQHPKKLKYLGPLSNPDAIGHSDDELLNA) are disordered. Over residues 426–435 (GHSDDELLNA) the composition is skewed to basic and acidic residues.

The protein is Islet cell autoantigen 1-like protein (Ica1l) of Rattus norvegicus (Rat).